A 149-amino-acid chain; its full sequence is Ribonuclease P protein component (149 aa).

The segment at 123–149 is disordered; it reads GTKVSRRSNGALHDAAPSSQPDPTVSG. Residues 139-149 are compositionally biased toward polar residues; that stretch reads PSSQPDPTVSG.

The protein belongs to the RnpA family. As to quaternary structure, consists of a catalytic RNA component (M1 or rnpB) and a protein subunit.

It catalyses the reaction Endonucleolytic cleavage of RNA, removing 5'-extranucleotides from tRNA precursor.. In terms of biological role, RNaseP catalyzes the removal of the 5'-leader sequence from pre-tRNA to produce the mature 5'-terminus. It can also cleave other RNA substrates such as 4.5S RNA. The protein component plays an auxiliary but essential role in vivo by binding to the 5'-leader sequence and broadening the substrate specificity of the ribozyme. The protein is Ribonuclease P protein component of Caulobacter vibrioides (strain ATCC 19089 / CIP 103742 / CB 15) (Caulobacter crescentus).